Consider the following 372-residue polypeptide: tRNA 2-selenouridine synthase (372 aa).

The Rhodanese domain maps to 19 to 142; that stretch reads LASGHPIMDV…MRQYLIDTID (124 aa). Catalysis depends on cysteine 102, which acts as the S-selanylcysteine intermediate.

The protein belongs to the SelU family. In terms of assembly, monomer.

The catalysed reaction is 5-methylaminomethyl-2-thiouridine(34) in tRNA + selenophosphate + (2E)-geranyl diphosphate + H2O + H(+) = 5-methylaminomethyl-2-selenouridine(34) in tRNA + (2E)-thiogeraniol + phosphate + diphosphate. It carries out the reaction 5-methylaminomethyl-2-thiouridine(34) in tRNA + (2E)-geranyl diphosphate = 5-methylaminomethyl-S-(2E)-geranyl-thiouridine(34) in tRNA + diphosphate. It catalyses the reaction 5-methylaminomethyl-S-(2E)-geranyl-thiouridine(34) in tRNA + selenophosphate + H(+) = 5-methylaminomethyl-2-(Se-phospho)selenouridine(34) in tRNA + (2E)-thiogeraniol. The enzyme catalyses 5-methylaminomethyl-2-(Se-phospho)selenouridine(34) in tRNA + H2O = 5-methylaminomethyl-2-selenouridine(34) in tRNA + phosphate. Involved in the post-transcriptional modification of the uridine at the wobble position (U34) of tRNA(Lys), tRNA(Glu) and tRNA(Gln). Catalyzes the conversion of 2-thiouridine (S2U-RNA) to 2-selenouridine (Se2U-RNA). Acts in a two-step process involving geranylation of 2-thiouridine (S2U) to S-geranyl-2-thiouridine (geS2U) and subsequent selenation of the latter derivative to 2-selenouridine (Se2U) in the tRNA chain. In Shewanella loihica (strain ATCC BAA-1088 / PV-4), this protein is tRNA 2-selenouridine synthase.